Reading from the N-terminus, the 264-residue chain is Ribosomal RNA small subunit methyltransferase A (264 aa).

Residues asparagine 12, leucine 14, glycine 39, glutamate 60, aspartate 83, and asparagine 103 each coordinate S-adenosyl-L-methionine.

This sequence belongs to the class I-like SAM-binding methyltransferase superfamily. rRNA adenine N(6)-methyltransferase family. RsmA subfamily.

The protein localises to the cytoplasm. It catalyses the reaction adenosine(1518)/adenosine(1519) in 16S rRNA + 4 S-adenosyl-L-methionine = N(6)-dimethyladenosine(1518)/N(6)-dimethyladenosine(1519) in 16S rRNA + 4 S-adenosyl-L-homocysteine + 4 H(+). Its function is as follows. Specifically dimethylates two adjacent adenosines (A1518 and A1519) in the loop of a conserved hairpin near the 3'-end of 16S rRNA in the 30S particle. May play a critical role in biogenesis of 30S subunits. This chain is Ribosomal RNA small subunit methyltransferase A, found in Syntrophotalea carbinolica (strain DSM 2380 / NBRC 103641 / GraBd1) (Pelobacter carbinolicus).